The following is an 878-amino-acid chain: Pyruvate dehydrogenase phosphatase regulatory subunit, mitochondrial (878 aa).

The N-terminal 26 residues, 1 to 26, are a transit peptide targeting the mitochondrion; it reads MLPRLLAVVRGPGSCRGWREGSPARG.

The protein belongs to the GcvT family. In terms of assembly, heterodimer of a catalytic (PDP1) and a regulatory (PDPR) subunit.

Its subcellular location is the mitochondrion matrix. Decreases the sensitivity of PDP1 to magnesium ions, and this inhibition is reversed by the polyamine spermine. This chain is Pyruvate dehydrogenase phosphatase regulatory subunit, mitochondrial (PDPR), found in Bos taurus (Bovine).